Here is a 140-residue protein sequence, read N- to C-terminus: Nucleoside diphosphate kinase (140 aa).

ATP is bound by residues Lys-9, Phe-57, Arg-85, Thr-91, Arg-102, and Asn-112. His-115 serves as the catalytic Pros-phosphohistidine intermediate.

The protein belongs to the NDK family. As to quaternary structure, homotetramer. Mg(2+) serves as cofactor.

It is found in the cytoplasm. It carries out the reaction a 2'-deoxyribonucleoside 5'-diphosphate + ATP = a 2'-deoxyribonucleoside 5'-triphosphate + ADP. It catalyses the reaction a ribonucleoside 5'-diphosphate + ATP = a ribonucleoside 5'-triphosphate + ADP. Its function is as follows. Major role in the synthesis of nucleoside triphosphates other than ATP. The ATP gamma phosphate is transferred to the NDP beta phosphate via a ping-pong mechanism, using a phosphorylated active-site intermediate. This is Nucleoside diphosphate kinase from Chlorobaculum parvum (strain DSM 263 / NCIMB 8327) (Chlorobium vibrioforme subsp. thiosulfatophilum).